The chain runs to 193 residues: Ribosome maturation factor RimM (193 aa).

The 82-residue stretch at 112–193 (VDEYYWIDLI…CITVDWGLDF (82 aa)) folds into the PRC barrel domain.

This sequence belongs to the RimM family. As to quaternary structure, binds ribosomal protein uS19.

It localises to the cytoplasm. Its function is as follows. An accessory protein needed during the final step in the assembly of 30S ribosomal subunit, possibly for assembly of the head region. Essential for efficient processing of 16S rRNA. May be needed both before and after RbfA during the maturation of 16S rRNA. It has affinity for free ribosomal 30S subunits but not for 70S ribosomes. This is Ribosome maturation factor RimM from Methylibium petroleiphilum (strain ATCC BAA-1232 / LMG 22953 / PM1).